A 279-amino-acid polypeptide reads, in one-letter code: Energy-coupling factor transporter ATP-binding protein EcfA1 (279 aa).

The ABC transporter domain maps to 6 to 240; it reads VEFRNVSFRY…KDALREIGLD (235 aa). Residue 40-47 participates in ATP binding; the sequence is GHNGSGKS.

Belongs to the ABC transporter superfamily. Energy-coupling factor EcfA family. Forms a stable energy-coupling factor (ECF) transporter complex composed of 2 membrane-embedded substrate-binding proteins (S component), 2 ATP-binding proteins (A component) and 2 transmembrane proteins (T component).

Its subcellular location is the cell membrane. Its function is as follows. ATP-binding (A) component of a common energy-coupling factor (ECF) ABC-transporter complex. Unlike classic ABC transporters this ECF transporter provides the energy necessary to transport a number of different substrates. The sequence is that of Energy-coupling factor transporter ATP-binding protein EcfA1 from Oceanobacillus iheyensis (strain DSM 14371 / CIP 107618 / JCM 11309 / KCTC 3954 / HTE831).